Reading from the N-terminus, the 763-residue chain is 1,4-alpha-glucan branching enzyme GlgB (763 aa).

D437 acts as the Nucleophile in catalysis. E488 (proton donor) is an active-site residue.

This sequence belongs to the glycosyl hydrolase 13 family. GlgB subfamily. As to quaternary structure, monomer.

The catalysed reaction is Transfers a segment of a (1-&gt;4)-alpha-D-glucan chain to a primary hydroxy group in a similar glucan chain.. It functions in the pathway glycan biosynthesis; glycogen biosynthesis. Functionally, catalyzes the formation of the alpha-1,6-glucosidic linkages in glycogen by scission of a 1,4-alpha-linked oligosaccharide from growing alpha-1,4-glucan chains and the subsequent attachment of the oligosaccharide to the alpha-1,6 position. The chain is 1,4-alpha-glucan branching enzyme GlgB from Synechococcus sp. (strain JA-2-3B'a(2-13)) (Cyanobacteria bacterium Yellowstone B-Prime).